An 81-amino-acid polypeptide reads, in one-letter code: Fungal defensin micasin (81 aa).

An N-terminal signal peptide occupies residues 1–21 (MQFTKLATILLVSLMGSAAIA). A propeptide spanning residues 22–43 (APATNNAAVDAAADATPAVEKR) is cleaved from the precursor. Disulfide bonds link C47/C68, C54/C76, and C58/C78.

The protein belongs to the invertebrate defensin family.

The protein localises to the secreted. Its function is as follows. Antibacterial peptide with potent activity against both Gram-positive and Gram-negative bacteria. May kill bacteria via an intracellular action mode to affect protein folding. Does not show effects on tested filamentous fungi or on the yeast S.cerevisiae. Does not act by destroying the membrane integrity, which is consistent with its nonamphiphilic architecture. Acts more rapidly than vancomycin, suggesting it does not act by inhibiting cell-wall biosynthesis. Does not cause hemolysis and has no cytotoxic effect on HEK cells. In vivo, is as efficient as vancomycin to protect mouse peritonitis models from S.aureus and P.aeruginosa infections. The sequence is that of Fungal defensin micasin from Arthroderma otae (Microsporum canis).